A 581-amino-acid chain; its full sequence is uncharacterized protein (581 aa).

This sequence belongs to the UbiD family.

This is an uncharacterized protein from Chlamydia caviae (strain ATCC VR-813 / DSM 19441 / 03DC25 / GPIC) (Chlamydophila caviae).